The following is a 421-amino-acid chain: Tyrosine--tRNA ligase (421 aa).

Residue Y36 coordinates L-tyrosine. The 'HIGH' region signature appears at 41-50 (PTADSLHIGH). 2 residues coordinate L-tyrosine: Y170 and Q174. Residues 231-235 (KFGKS) carry the 'KMSKS' region motif. K234 contributes to the ATP binding site. Residues 353–420 (TNIVEALIET…KKKYFMVNYQ (68 aa)) form the S4 RNA-binding domain.

Belongs to the class-I aminoacyl-tRNA synthetase family. TyrS type 1 subfamily. In terms of assembly, homodimer.

It is found in the cytoplasm. It carries out the reaction tRNA(Tyr) + L-tyrosine + ATP = L-tyrosyl-tRNA(Tyr) + AMP + diphosphate + H(+). Catalyzes the attachment of tyrosine to tRNA(Tyr) in a two-step reaction: tyrosine is first activated by ATP to form Tyr-AMP and then transferred to the acceptor end of tRNA(Tyr). The polypeptide is Tyrosine--tRNA ligase (Staphylococcus epidermidis (strain ATCC 35984 / DSM 28319 / BCRC 17069 / CCUG 31568 / BM 3577 / RP62A)).